Reading from the N-terminus, the 293-residue chain is 33 kDa chaperonin (293 aa).

2 cysteine pairs are disulfide-bonded: Cys237-Cys239 and Cys271-Cys274.

The protein belongs to the HSP33 family. Post-translationally, under oxidizing conditions two disulfide bonds are formed involving the reactive cysteines. Under reducing conditions zinc is bound to the reactive cysteines and the protein is inactive.

Its subcellular location is the cytoplasm. In terms of biological role, redox regulated molecular chaperone. Protects both thermally unfolding and oxidatively damaged proteins from irreversible aggregation. Plays an important role in the bacterial defense system toward oxidative stress. The chain is 33 kDa chaperonin from Haemophilus influenzae (strain PittEE).